A 341-amino-acid chain; its full sequence is Large ribosomal subunit protein uL29m (341 aa).

The segment at L44–D74 is disordered. Over residues R48–V62 the composition is skewed to basic residues.

The protein belongs to the universal ribosomal protein uL29 family. As to quaternary structure, component of the mitochondrial large ribosomal subunit. Mature mitochondrial ribosomes consist of a small (37S) and a large (54S) subunit. The 37S subunit contains at least 33 different proteins and 1 molecule of RNA (15S). The 54S subunit contains at least 45 different proteins and 1 molecule of RNA (21S).

It is found in the mitochondrion. This chain is Large ribosomal subunit protein uL29m (MRPL4), found in Eremothecium gossypii (strain ATCC 10895 / CBS 109.51 / FGSC 9923 / NRRL Y-1056) (Yeast).